A 708-amino-acid polypeptide reads, in one-letter code: Ion-translocating oxidoreductase complex subunit C (708 aa).

4Fe-4S ferredoxin-type domains follow at residues 369 to 397 (GEPQ…QQLY) and 407 to 436 (KATT…VQYF). [4Fe-4S] cluster-binding residues include Cys-377, Cys-380, Cys-383, Cys-387, Cys-416, Cys-419, Cys-422, and Cys-426. A disordered region spans residues 663-684 (KARKLEQQQTNAEPEEQVDPRK).

Belongs to the 4Fe4S bacterial-type ferredoxin family. RnfC subfamily. In terms of assembly, the complex is composed of six subunits: RsxA, RsxB, RsxC, RsxD, RsxE and RsxG. [4Fe-4S] cluster serves as cofactor.

It is found in the cell inner membrane. Part of a membrane-bound complex that couples electron transfer with translocation of ions across the membrane. Required to maintain the reduced state of SoxR. This Shigella boydii serotype 18 (strain CDC 3083-94 / BS512) protein is Ion-translocating oxidoreductase complex subunit C.